Reading from the N-terminus, the 306-residue chain is WUSCHEL-related homeobox 13 (306 aa).

Residues 1-11 (MMALGVPPPPS) show a composition bias toward pro residues. Disordered stretches follow at residues 1 to 20 (MMALGVPPPPSRAYVSGPLR), 103 to 142 (PRSHGHRTGGGGFSLKSSPFSSVGEERVPDPKPRRNPRPE), and 190 to 276 (SRSK…ARAT). Residues 126–142 (GEERVPDPKPRRNPRPE) show a composition bias toward basic and acidic residues. A DNA-binding region (homeobox; WUS-type) is located at residues 132 to 196 (DPKPRRNPRP…NRKSRSKNKL (65 aa)). A compositionally biased stretch (gly residues) spans 199–210 (GGTGRAGLGLGG). A compositionally biased stretch (pro residues) spans 231 to 242 (FTPPPILPPQPV). Positions 243 to 270 (QPQQQLVSPVAAPTSLSSSSSDRSSGSS) are enriched in low complexity.

It belongs to the WUS homeobox family.

It is found in the nucleus. In terms of biological role, transcription factor which may be involved in developmental processes. The sequence is that of WUSCHEL-related homeobox 13 (WOX13) from Oryza sativa subsp. japonica (Rice).